The chain runs to 901 residues: Probable inorganic carbon transporter subunit DabA (901 aa).

Zn(2+) is bound by residues C424, D426, H606, and C621.

Belongs to the inorganic carbon transporter (TC 9.A.2) DabA family. As to quaternary structure, forms a complex with DabB. Zn(2+) is required as a cofactor.

It localises to the cell membrane. Part of an energy-coupled inorganic carbon pump. The polypeptide is Probable inorganic carbon transporter subunit DabA (Staphylococcus aureus (strain NCTC 8325 / PS 47)).